The primary structure comprises 405 residues: NADH-quinone oxidoreductase subunit D (405 aa).

This sequence belongs to the complex I 49 kDa subunit family. As to quaternary structure, NDH-1 is composed of 14 different subunits. Subunits NuoB, C, D, E, F, and G constitute the peripheral sector of the complex.

Its subcellular location is the cell inner membrane. The enzyme catalyses a quinone + NADH + 5 H(+)(in) = a quinol + NAD(+) + 4 H(+)(out). NDH-1 shuttles electrons from NADH, via FMN and iron-sulfur (Fe-S) centers, to quinones in the respiratory chain. The immediate electron acceptor for the enzyme in this species is believed to be ubiquinone. Couples the redox reaction to proton translocation (for every two electrons transferred, four hydrogen ions are translocated across the cytoplasmic membrane), and thus conserves the redox energy in a proton gradient. This chain is NADH-quinone oxidoreductase subunit D, found in Leptospira interrogans serogroup Icterohaemorrhagiae serovar copenhageni (strain Fiocruz L1-130).